A 721-amino-acid chain; its full sequence is Cell wall protein RBT1 (721 aa).

The signal sequence occupies residues 1–20 (MRFATAQLAALAYYILSTEA). One can recognise a Flo11 domain in the interval 55 to 278 (GSKNKREAEI…DCQCDTPSPS (224 aa)). 3 disordered regions span residues 278–410 (STTT…LTTT), 453–510 (LTET…TVTE), and 555–666 (TPAT…ALVS). Over residues 454-499 (TETTPVPSSVDSTSVTSAPETTPESTAPESSAPESSAPESSAPVTE) the composition is skewed to low complexity. Polar residues predominate over residues 500 to 510 (TPTGPVSTVTE). Composition is skewed to low complexity over residues 555 to 575 (TPAT…VPAT) and 584 to 663 (SSAP…KTSA). A lipid anchor (GPI-anchor amidated serine) is attached at Ser-696. A propeptide spans 697-721 (SFEGAGNNMRLTYGAAIIGLAAFLI) (removed in mature form).

The protein belongs to the HWP1 family. Post-translationally, the GPI-anchor is attached to the protein in the endoplasmic reticulum and serves to target the protein to the cell surface. There, the glucosamine-inositol phospholipid moiety is cleaved off and the GPI-modified mannoprotein is covalently attached via its lipidless GPI glycan remnant to the 1,6-beta-glucan of the outer cell wall layer.

The protein resides in the secreted. The protein localises to the cell wall. Its subcellular location is the membrane. Its function is as follows. GPI-anchored cell wall protein required for mating efficiency, biofilm formation, and virulence. Involved in normal disseminated infection, but not in intestinal colonization. The sequence is that of Cell wall protein RBT1 (RBT1) from Candida albicans (strain SC5314 / ATCC MYA-2876) (Yeast).